We begin with the raw amino-acid sequence, 196 residues long: uncharacterized protein (196 aa).

The Macro domain maps to 1-183; the sequence is MREFHYGVHM…RFLFILSDLG (183 aa).

Belongs to the MacroD-type family.

This is an uncharacterized protein from Thermoplasma acidophilum (strain ATCC 25905 / DSM 1728 / JCM 9062 / NBRC 15155 / AMRC-C165).